We begin with the raw amino-acid sequence, 227 residues long: Uracil-DNA glycosylase (227 aa).

The Proton acceptor role is filled by aspartate 64.

The protein belongs to the uracil-DNA glycosylase (UDG) superfamily. UNG family.

The protein resides in the cytoplasm. It catalyses the reaction Hydrolyzes single-stranded DNA or mismatched double-stranded DNA and polynucleotides, releasing free uracil.. Excises uracil residues from the DNA which can arise as a result of misincorporation of dUMP residues by DNA polymerase or due to deamination of cytosine. This chain is Uracil-DNA glycosylase, found in Sodalis glossinidius (strain morsitans).